The sequence spans 305 residues: Lipoyl synthase (305 aa).

[4Fe-4S] cluster-binding residues include cysteine 41, cysteine 46, cysteine 52, cysteine 68, cysteine 72, cysteine 75, and serine 281. Residues 54–270 enclose the Radical SAM core domain; the sequence is GARRTATFMI…RKVAMDKGFK (217 aa). A compositionally biased stretch (basic and acidic residues) spans 283-298; sequence HADEQVNEAAKEKQRQ. The disordered stretch occupies residues 283–305; that stretch reads HADEQVNEAAKEKQRQGEAQLNS.

It belongs to the radical SAM superfamily. Lipoyl synthase family. Requires [4Fe-4S] cluster as cofactor.

The protein localises to the cytoplasm. The catalysed reaction is [[Fe-S] cluster scaffold protein carrying a second [4Fe-4S](2+) cluster] + N(6)-octanoyl-L-lysyl-[protein] + 2 oxidized [2Fe-2S]-[ferredoxin] + 2 S-adenosyl-L-methionine + 4 H(+) = [[Fe-S] cluster scaffold protein] + N(6)-[(R)-dihydrolipoyl]-L-lysyl-[protein] + 4 Fe(3+) + 2 hydrogen sulfide + 2 5'-deoxyadenosine + 2 L-methionine + 2 reduced [2Fe-2S]-[ferredoxin]. The protein operates within protein modification; protein lipoylation via endogenous pathway; protein N(6)-(lipoyl)lysine from octanoyl-[acyl-carrier-protein]. Its function is as follows. Catalyzes the radical-mediated insertion of two sulfur atoms into the C-6 and C-8 positions of the octanoyl moiety bound to the lipoyl domains of lipoate-dependent enzymes, thereby converting the octanoylated domains into lipoylated derivatives. The polypeptide is Lipoyl synthase (Staphylococcus aureus (strain bovine RF122 / ET3-1)).